We begin with the raw amino-acid sequence, 1039 residues long: Antigen 43 (1039 aa).

The signal sequence occupies residues 1 to 52; that stretch reads MKRHLNTCYRLVWNHMTGAFVVASELARARGKRGGVAVALSLAAVTSLPVLA. The Autotransporter domain maps to 737–1039; it reads VNGENNSVRL…NGQATLNVTF (303 aa).

In terms of assembly, interaction with TamA of the translocation and assembly module (TAM) initiates insertion in the outer membrane.

It localises to the periplasm. It is found in the secreted. Its subcellular location is the cell surface. The protein localises to the cell outer membrane. Its function is as follows. Controls colony form variation and autoaggregation. May function as an adhesin. This Escherichia coli (strain K12) protein is Antigen 43 (flu).